A 58-amino-acid chain; its full sequence is UPF0391 membrane protein ABO_0024 (58 aa).

The next 2 helical transmembrane spans lie at 4-24 (WALTFLVVAIIAGVLGFGGIA) and 28-48 (ASIAKIIFFIFLALLVISLVV).

It belongs to the UPF0391 family.

The protein resides in the cell membrane. This Alcanivorax borkumensis (strain ATCC 700651 / DSM 11573 / NCIMB 13689 / SK2) protein is UPF0391 membrane protein ABO_0024.